A 374-amino-acid polypeptide reads, in one-letter code: Protein Brevis radix-like 2 (374 aa).

2 disordered regions span residues Asn-12–Leu-43 and Ala-57–Asp-80. The span at Ser-65 to Asp-80 shows a compositional bias: polar residues. One can recognise a BRX 1 domain in the interval Lys-143 to Asn-198. Positions Gln-205 to Asp-316 are disordered. Composition is skewed to polar residues over residues Ser-246 to Gln-259 and Gly-267 to Asp-288. Residues Glu-289–Glu-307 are compositionally biased toward basic and acidic residues. The BRX 2 domain occupies Thr-319–Leu-374.

It belongs to the BRX family. Expressed in roots.

It is found in the nucleus. The protein is Protein Brevis radix-like 2 (BRXL2) of Arabidopsis thaliana (Mouse-ear cress).